The sequence spans 613 residues: Dihydroxy-acid dehydratase (613 aa).

Asp-81 provides a ligand contact to Mg(2+). A [2Fe-2S] cluster-binding site is contributed by Cys-122. Mg(2+)-binding residues include Asp-123 and Lys-124. An N6-carboxylysine modification is found at Lys-124. Position 195 (Cys-195) interacts with [2Fe-2S] cluster. Glu-491 lines the Mg(2+) pocket. Ser-517 serves as the catalytic Proton acceptor.

This sequence belongs to the IlvD/Edd family. In terms of assembly, homodimer. [2Fe-2S] cluster is required as a cofactor. It depends on Mg(2+) as a cofactor.

The enzyme catalyses (2R)-2,3-dihydroxy-3-methylbutanoate = 3-methyl-2-oxobutanoate + H2O. It carries out the reaction (2R,3R)-2,3-dihydroxy-3-methylpentanoate = (S)-3-methyl-2-oxopentanoate + H2O. Its pathway is amino-acid biosynthesis; L-isoleucine biosynthesis; L-isoleucine from 2-oxobutanoate: step 3/4. It functions in the pathway amino-acid biosynthesis; L-valine biosynthesis; L-valine from pyruvate: step 3/4. Functions in the biosynthesis of branched-chain amino acids. Catalyzes the dehydration of (2R,3R)-2,3-dihydroxy-3-methylpentanoate (2,3-dihydroxy-3-methylvalerate) into 2-oxo-3-methylpentanoate (2-oxo-3-methylvalerate) and of (2R)-2,3-dihydroxy-3-methylbutanoate (2,3-dihydroxyisovalerate) into 2-oxo-3-methylbutanoate (2-oxoisovalerate), the penultimate precursor to L-isoleucine and L-valine, respectively. This chain is Dihydroxy-acid dehydratase, found in Vibrio atlanticus (strain LGP32) (Vibrio splendidus (strain Mel32)).